The chain runs to 313 residues: Protein FixB (313 aa).

An FAD-binding site is contributed by 255 to 283; that stretch reads LYLAVGISGQIQHMVGANGAQTIFAINKD.

The protein belongs to the ETF alpha-subunit/FixB family. In terms of assembly, heterodimer of FixA and FixB.

It functions in the pathway amine and polyamine metabolism; carnitine metabolism. Its function is as follows. Required for anaerobic carnitine reduction. May bring reductant to CaiA. This is Protein FixB from Salmonella agona (strain SL483).